The following is a 93-amino-acid chain: YcgL domain-containing protein VFMJ11_1829 (93 aa).

In terms of domain architecture, YcgL spans Met1–Lys84.

This is YcgL domain-containing protein VFMJ11_1829 from Aliivibrio fischeri (strain MJ11) (Vibrio fischeri).